Here is a 446-residue protein sequence, read N- to C-terminus: Glucose transporter GlcP (446 aa).

The Cytoplasmic portion of the chain corresponds to 1 to 6 (MKANKY). The chain crosses the membrane as a helical span at residues 7 to 31 (LIFILGALGGLLYGYDNGVISGALL). Over 32–38 (FIHKDIP) the chain is Extracellular. The helical transmembrane segment at 39 to 64 (LNSTTEGIVVSSMLIGAIVGAGSSGP) threads the bilayer. Topologically, residues 65-70 (LADKLG) are cytoplasmic. Residues 71 to 90 (RRRLVMLIAIVFIIGALILA) form a helical membrane-spanning segment. Over 91 to 94 (ASTN) the chain is Extracellular. The helical transmembrane segment at 95–122 (LALLIIGRLIIGLAVGGSMSTVPVYLSE) threads the bilayer. At 123 to 129 (MAPTEYR) the chain is on the cytoplasmic side. The helical transmembrane segment at 130–152 (GSLGSLNQLMITIGILAAYLVNY) threads the bilayer. Over 153–154 (AF) the chain is Extracellular. The chain crosses the membrane as a helical span at residues 155–180 (ADIEGWRWMLGLAVVPSVILLVGIYF). The Cytoplasmic segment spans residues 181-234 (MPESPRWLLENRNEEAARQVMKITYDDSEIDKELKEMKEINAISESTWTVIKSP). The chain crosses the membrane as a helical span at residues 235–269 (WLGRILIVGCIFAIFQQFIGINAVIFYSSSIFAKA). At 270–272 (GLG) the chain is on the extracellular side. A helical membrane pass occupies residues 273-295 (EAASILGSVGIGTINVLVTIVAI). Residues 296–303 (FVVDKIDR) lie on the Cytoplasmic side of the membrane. The chain crosses the membrane as a helical span at residues 304–324 (KKLLVGGNIGMIASLLIMAIL). At 325–329 (IWTIG) the chain is on the extracellular side. A helical transmembrane segment spans residues 330 to 363 (IASSAWIIIVCLSLFIVFFGISWGPVLWVMLPEL). Residues 364-370 (FPMRARG) lie on the Cytoplasmic side of the membrane. Residues 371-399 (AATGISALVLNIGTLIVSLFFPILSDALS) traverse the membrane as a helical segment. Residues 400–401 (TE) are Extracellular-facing. Residues 402–420 (WVFLIFAFIGVLAMIFVIK) form a helical membrane-spanning segment. Residues 421-446 (FLPETRGRSLEEIEYELRERTGARTE) are Cytoplasmic-facing.

The protein belongs to the major facilitator superfamily. Sugar transporter (TC 2.A.1.1) family.

Its subcellular location is the cell membrane. With respect to regulation, inhibited by carbonyl cyanide m-chlorophenylhydrazone (CCCP) and by the human glucose transport inhibitors cytochalasin B, phloretin, and forskolin. Its function is as follows. Transporter highly specific for glucose uptake. The protein is Glucose transporter GlcP of Staphylococcus epidermidis (strain ATCC 12228 / FDA PCI 1200).